The primary structure comprises 262 residues: Hemin import ATP-binding protein HmuV (262 aa).

The region spanning 5 to 242 (LEARKAGFAT…ELIGAVFDVE (238 aa)) is the ABC transporter domain. 37-44 (GPNGAGKS) provides a ligand contact to ATP.

Belongs to the ABC transporter superfamily. Heme (hemin) importer (TC 3.A.1.14.5) family. As to quaternary structure, the complex is composed of two ATP-binding proteins (HmuV), two transmembrane proteins (HmuU) and a solute-binding protein (HmuT).

The protein resides in the cell inner membrane. Functionally, part of the ABC transporter complex HmuTUV involved in hemin import. Responsible for energy coupling to the transport system. The polypeptide is Hemin import ATP-binding protein HmuV (Rhodopseudomonas palustris (strain HaA2)).